The following is a 639-amino-acid chain: Threonine--tRNA ligase (639 aa).

Positions 1 to 61 (MIHITLPDGS…TQDSPLSIVT (61 aa)) constitute a TGS domain. Positions 242–533 (DHRKLGRELD…LIEEHAGALP (292 aa)) are catalytic. Positions 333, 384, and 510 each coordinate Zn(2+).

It belongs to the class-II aminoacyl-tRNA synthetase family. Homodimer. Zn(2+) is required as a cofactor.

It localises to the cytoplasm. It catalyses the reaction tRNA(Thr) + L-threonine + ATP = L-threonyl-tRNA(Thr) + AMP + diphosphate + H(+). Catalyzes the attachment of threonine to tRNA(Thr) in a two-step reaction: L-threonine is first activated by ATP to form Thr-AMP and then transferred to the acceptor end of tRNA(Thr). Also edits incorrectly charged L-seryl-tRNA(Thr). This chain is Threonine--tRNA ligase, found in Acidovorax ebreus (strain TPSY) (Diaphorobacter sp. (strain TPSY)).